The chain runs to 445 residues: NADH-quinone oxidoreductase subunit F (445 aa).

61-70 (GRGGAGFSTG) is an NAD(+) binding site. 174–221 (GAGRYICGEETALINSLEGRRANPRSKPPFPATSGVWGKPTCVNNVET) is a binding site for FMN. [4Fe-4S] cluster contacts are provided by Cys351, Cys354, Cys357, and Cys398.

Belongs to the complex I 51 kDa subunit family. In terms of assembly, composed of 13 different subunits. Subunits NuoCD, E, F, and G constitute the peripheral sector of the complex. It depends on FMN as a cofactor. [4Fe-4S] cluster is required as a cofactor.

It carries out the reaction a quinone + NADH + 5 H(+)(in) = a quinol + NAD(+) + 4 H(+)(out). NDH-1 shuttles electrons from NADH, via FMN and iron-sulfur (Fe-S) centers, to quinones in the respiratory chain. The immediate electron acceptor for the enzyme in this species is believed to be ubiquinone. Couples the redox reaction to proton translocation (for every two electrons transferred, four hydrogen ions are translocated across the cytoplasmic membrane), and thus conserves the redox energy in a proton gradient. This Salmonella typhimurium (strain LT2 / SGSC1412 / ATCC 700720) protein is NADH-quinone oxidoreductase subunit F (nuoF).